Reading from the N-terminus, the 528-residue chain is Carboxysome shell carbonic anhydrase (528 aa).

The disordered stretch occupies residues 17–47; the sequence is PIAPNPRWQKENPTAHGSTDTGGFGYNGGNE. Cys-184 provides a ligand contact to Zn(2+). Catalysis depends on Asp-186, which acts as the Proton acceptor. Zn(2+) is bound by residues His-252 and Cys-263.

Belongs to the beta-class carbonic anhydrase family. CsoSCA subfamily. As to quaternary structure, homodimer. The cofactor is Zn(2+).

The protein localises to the carboxysome. It catalyses the reaction hydrogencarbonate + H(+) = CO2 + H2O. Its activity is regulated as follows. Inhibited by ethoxyzolamide and dithiothreitol (in crude extracts upon expression in E.coli). Reversible hydration of carbon dioxide. This bacteria encodes at least 3 CA enzymes. Essential for chemolithotrophic carbon dioxide fixation, supplies CO(2) to RuBisCO (ribulose bisphosphate carboxylase, cbbL-cbbS) in the carboxysome. This is Carboxysome shell carbonic anhydrase from Hydrogenovibrio crunogenus (strain DSM 25203 / XCL-2) (Thiomicrospira crunogena).